The following is a 400-amino-acid chain: Phosphoglycerate kinase (400 aa).

Substrate contacts are provided by residues 23–25 (DLN), R38, 61–64 (HFGR), R120, and R153. Residues K203, E325, and 355-358 (GGDT) each bind ATP.

It belongs to the phosphoglycerate kinase family. Monomer.

It is found in the cytoplasm. The catalysed reaction is (2R)-3-phosphoglycerate + ATP = (2R)-3-phospho-glyceroyl phosphate + ADP. It functions in the pathway carbohydrate degradation; glycolysis; pyruvate from D-glyceraldehyde 3-phosphate: step 2/5. The polypeptide is Phosphoglycerate kinase (Methylorubrum extorquens (strain PA1) (Methylobacterium extorquens)).